The sequence spans 218 residues: Adenylate kinase (218 aa).

10-15 (GAGKGT) contributes to the ATP binding site. Positions 30 to 59 (STGDMFRAAMANQTEMGRLAKSFIDKGELV) are NMP. Residues Thr-31, Arg-36, 57 to 59 (ELV), 86 to 89 (GYPR), and Gln-93 each bind AMP. An LID region spans residues 127–165 (GRFICRSCGSTYHKVFNPTKVEGTCDVCGGHEFFQREDD). Arg-128 is a binding site for ATP. Zn(2+)-binding residues include Cys-131 and Cys-134. 137–138 (TY) is a binding site for ATP. 2 residues coordinate Zn(2+): Cys-151 and Cys-154. The AMP site is built by Arg-162 and Arg-173. Gln-201 contacts ATP.

Belongs to the adenylate kinase family. In terms of assembly, monomer.

It localises to the cytoplasm. The catalysed reaction is AMP + ATP = 2 ADP. The protein operates within purine metabolism; AMP biosynthesis via salvage pathway; AMP from ADP: step 1/1. In terms of biological role, catalyzes the reversible transfer of the terminal phosphate group between ATP and AMP. Plays an important role in cellular energy homeostasis and in adenine nucleotide metabolism. This Streptococcus thermophilus (strain CNRZ 1066) protein is Adenylate kinase.